We begin with the raw amino-acid sequence, 591 residues long: Lipoprotein LpqB (591 aa).

Residues methionine 1–glycine 20 form the signal peptide. Residue cysteine 21 is the site of N-palmitoyl cysteine attachment. Cysteine 21 carries S-diacylglycerol cysteine lipidation.

It belongs to the LpqB lipoprotein family.

It localises to the cell membrane. The polypeptide is Lipoprotein LpqB (Cutibacterium acnes (strain DSM 16379 / KPA171202) (Propionibacterium acnes)).